Reading from the N-terminus, the 528-residue chain is Arginine--tRNA ligase (528 aa).

The short motif at 112–122 is the 'HIGH' region element; the sequence is ANPTGPLHIGH.

The protein belongs to the class-I aminoacyl-tRNA synthetase family. As to quaternary structure, monomer.

It is found in the cytoplasm. It catalyses the reaction tRNA(Arg) + L-arginine + ATP = L-arginyl-tRNA(Arg) + AMP + diphosphate. The sequence is that of Arginine--tRNA ligase from Wolinella succinogenes (strain ATCC 29543 / DSM 1740 / CCUG 13145 / JCM 31913 / LMG 7466 / NCTC 11488 / FDC 602W) (Vibrio succinogenes).